Here is a 366-residue protein sequence, read N- to C-terminus: 3-dehydroquinate synthase (366 aa).

Residues 71-76, 105-109, 129-130, Lys-142, Lys-151, and 169-172 each bind NAD(+); these read DGEKYK, GVIGD, TT, and TLQT. Positions 184, 247, and 264 each coordinate Zn(2+).

It belongs to the sugar phosphate cyclases superfamily. Dehydroquinate synthase family. The cofactor is Co(2+). Zn(2+) is required as a cofactor. NAD(+) serves as cofactor.

Its subcellular location is the cytoplasm. The catalysed reaction is 7-phospho-2-dehydro-3-deoxy-D-arabino-heptonate = 3-dehydroquinate + phosphate. The protein operates within metabolic intermediate biosynthesis; chorismate biosynthesis; chorismate from D-erythrose 4-phosphate and phosphoenolpyruvate: step 2/7. Its function is as follows. Catalyzes the conversion of 3-deoxy-D-arabino-heptulosonate 7-phosphate (DAHP) to dehydroquinate (DHQ). This Actinobacillus pleuropneumoniae serotype 5b (strain L20) protein is 3-dehydroquinate synthase.